The following is a 342-amino-acid chain: MLKIGIVGGTGYTGVELLRILSQHPEVNIEAITSRKEAGMDVAQLFPSLRGRIELKFSDPAEANLEKCDVVFFATPNGIAMKQVPSLLDAGVRIIDLAADFRIKDIAVWEKWYGMPHACPELVAEAVYGLPEINRDRIKTARLIANPGCYPTAVQLGFLPLVESGAADLDHLVADAKSGVSGAGRNAEIHTLFAEAADNFKAYGVSGHRHLPEIRQGLSQAAKHPVGLTFVPHLTPMIRGIHATLYVKLLKEVDLQALYENRYVNEPFVDVLPAGSHPETRSVRGSNLCRIAVHRPQGGDTAVILSVTDNLVKGAAGQAVQNMNLMFGLPETLAITHLPLFP.

Residue cysteine 149 is part of the active site.

This sequence belongs to the NAGSA dehydrogenase family. Type 1 subfamily.

Its subcellular location is the cytoplasm. It catalyses the reaction N-acetyl-L-glutamate 5-semialdehyde + phosphate + NADP(+) = N-acetyl-L-glutamyl 5-phosphate + NADPH + H(+). It participates in amino-acid biosynthesis; L-arginine biosynthesis; N(2)-acetyl-L-ornithine from L-glutamate: step 3/4. Functionally, catalyzes the NADPH-dependent reduction of N-acetyl-5-glutamyl phosphate to yield N-acetyl-L-glutamate 5-semialdehyde. In Nitrosospira multiformis (strain ATCC 25196 / NCIMB 11849 / C 71), this protein is N-acetyl-gamma-glutamyl-phosphate reductase.